An 863-amino-acid polypeptide reads, in one-letter code: Leucine--tRNA ligase (863 aa).

The 'HIGH' region motif lies at 42–52; the sequence is PYPSGRLHMGH. Positions 618–622 match the 'KMSKS' region motif; it reads KMSKS. Lys-621 serves as a coordination point for ATP.

It belongs to the class-I aminoacyl-tRNA synthetase family.

It localises to the cytoplasm. It catalyses the reaction tRNA(Leu) + L-leucine + ATP = L-leucyl-tRNA(Leu) + AMP + diphosphate. In Colwellia psychrerythraea (strain 34H / ATCC BAA-681) (Vibrio psychroerythus), this protein is Leucine--tRNA ligase.